Here is a 221-residue protein sequence, read N- to C-terminus: Epididymal secretory glutathione peroxidase (221 aa).

The first 21 residues, 1–21, serve as a signal peptide directing secretion; it reads MTTQLRVVHLLPLLLACFVQT. The active site involves cysteine 73.

The protein belongs to the glutathione peroxidase family. Epididymis.

Its subcellular location is the secreted. It catalyses the reaction 2 glutathione + H2O2 = glutathione disulfide + 2 H2O. Protects cells and enzymes from oxidative damage, by catalyzing the reduction of hydrogen peroxide, lipid peroxides and organic hydroperoxide, by glutathione. May constitute a glutathione peroxidase-like protective system against peroxide damage in sperm membrane lipids. This is Epididymal secretory glutathione peroxidase (GPX5) from Macaca fascicularis (Crab-eating macaque).